Reading from the N-terminus, the 187-residue chain is GTP cyclohydrolase 1 (187 aa).

Zn(2+) contacts are provided by C74, H77, and C145.

The protein belongs to the GTP cyclohydrolase I family. As to quaternary structure, homomer.

The enzyme catalyses GTP + H2O = 7,8-dihydroneopterin 3'-triphosphate + formate + H(+). The protein operates within cofactor biosynthesis; 7,8-dihydroneopterin triphosphate biosynthesis; 7,8-dihydroneopterin triphosphate from GTP: step 1/1. The protein is GTP cyclohydrolase 1 of Sulfurihydrogenibium sp. (strain YO3AOP1).